The sequence spans 253 residues: Ubiquinone/menaquinone biosynthesis C-methyltransferase UbiE (253 aa).

Residues Thr-76, Asp-97, 125 to 126 (NA), and Ser-142 each bind S-adenosyl-L-methionine.

It belongs to the class I-like SAM-binding methyltransferase superfamily. MenG/UbiE family.

The enzyme catalyses a 2-demethylmenaquinol + S-adenosyl-L-methionine = a menaquinol + S-adenosyl-L-homocysteine + H(+). It catalyses the reaction a 2-methoxy-6-(all-trans-polyprenyl)benzene-1,4-diol + S-adenosyl-L-methionine = a 5-methoxy-2-methyl-3-(all-trans-polyprenyl)benzene-1,4-diol + S-adenosyl-L-homocysteine + H(+). The protein operates within quinol/quinone metabolism; menaquinone biosynthesis; menaquinol from 1,4-dihydroxy-2-naphthoate: step 2/2. It functions in the pathway cofactor biosynthesis; ubiquinone biosynthesis. In terms of biological role, methyltransferase required for the conversion of demethylmenaquinol (DMKH2) to menaquinol (MKH2) and the conversion of 2-polyprenyl-6-methoxy-1,4-benzoquinol (DDMQH2) to 2-polyprenyl-3-methyl-6-methoxy-1,4-benzoquinol (DMQH2). The chain is Ubiquinone/menaquinone biosynthesis C-methyltransferase UbiE from Xanthomonas oryzae pv. oryzae (strain MAFF 311018).